Reading from the N-terminus, the 331-residue chain is Glyceraldehyde-3-phosphate dehydrogenase (331 aa).

NAD(+) contacts are provided by residues 12 to 13, Asp-34, Arg-78, and Thr-120; that span reads RI. 2 positions are modified to N6-acetyllysine: Lys-132 and Lys-138. D-glyceraldehyde 3-phosphate is bound by residues 149 to 151 and Thr-180; that span reads SCT. Cys-150 functions as the Nucleophile in the catalytic mechanism. An N6-acetyllysine modification is found at Lys-192. Residues 209-210 and Arg-232 contribute to the D-glyceraldehyde 3-phosphate site; that span reads TG. Lys-249 is subject to N6-acetyllysine. Asn-314 contributes to the NAD(+) binding site.

The protein belongs to the glyceraldehyde-3-phosphate dehydrogenase family. As to quaternary structure, homotetramer.

The protein resides in the cytoplasm. It carries out the reaction D-glyceraldehyde 3-phosphate + phosphate + NAD(+) = (2R)-3-phospho-glyceroyl phosphate + NADH + H(+). It functions in the pathway carbohydrate degradation; glycolysis; pyruvate from D-glyceraldehyde 3-phosphate: step 1/5. Its function is as follows. Catalyzes the oxidative phosphorylation of glyceraldehyde 3-phosphate (G3P) to 1,3-bisphosphoglycerate (BPG) using the cofactor NAD. The first reaction step involves the formation of a hemiacetal intermediate between G3P and a cysteine residue, and this hemiacetal intermediate is then oxidized to a thioester, with concomitant reduction of NAD to NADH. The reduced NADH is then exchanged with the second NAD, and the thioester is attacked by a nucleophilic inorganic phosphate to produce BPG. This is Glyceraldehyde-3-phosphate dehydrogenase (gapA) from Escherichia coli O6:H1 (strain CFT073 / ATCC 700928 / UPEC).